The primary structure comprises 755 residues: MKFNQFSYIPVSPETAYQELRSLGFEVSLDASAKANFESFVRKYFLFFEDTDLALKNWIADPETDLLSFFQSDRPLTAEVFGLVALQLLGFVPNVDFTDSVAFLEKMAFPIAFDGSLNNLHQLLATRTQSGNTLIDQLVAQDLIPISNDYVFFNGKSLATFDTNQLHREVVYVETPVDTDKDGLLDLVKVTILRPNVDFPVPAMMTASPYQQGTNEPSSDKLTHKMEGDLLVKPAGKISLSRPEIKAPEADLTPINPVTKAEERFAHTDTYTLNDYMLARGVASIYVSGVGTFNSEGFMTSGDYQQVLAYKAVIDWLNGRARAFTSRSRQHTITADWASGKVTTTGLSYLGTMSNALATTGVDGLEMVIAEAGISSWYDYYRENGLLVSPGGYPGEDLDTLTEFTYSRALLAGEYLRHQKDYEAYLNELSTAIDRKHGDYNQFWHDRNYVQFADRVKATVVFTHGSQDWNVKPINVYQMFRALPKSLEKHLFFHNGAHVYMNAWQSIDFRESMNALICQKLLGLDNGYTLPTVIWQNNQSEQTWEVLDNFGHDNGKHIQLGKSEASIANHYEEEIFAKYGKAYQSFKDDLFMDKANAITLDFELDQDIQINGRVHLELRVKSSTNRGLISAQVLEMGDKKYLAPIPELKRMSLDNGRLFKEEALRELPFKQAKYRVITKGHLNLQNRKDLLSIENVTPNEWMTIGLDLQPTIYKPNKGDKLRLVLYTTDFEHTIRDNSDYEVTVDLSQSKMTLPY.

Catalysis depends on charge relay system residues Ser-348, Asp-468, and His-498.

Belongs to the peptidase S15 family. Homodimer.

It localises to the cytoplasm. It carries out the reaction Hydrolyzes Xaa-Pro-|- bonds to release unblocked, N-terminal dipeptides from substrates including Ala-Pro-|-p-nitroanilide and (sequentially) Tyr-Pro-|-Phe-Pro-|-Gly-Pro-|-Ile.. In terms of biological role, removes N-terminal dipeptides sequentially from polypeptides having unsubstituted N-termini provided that the penultimate residue is proline. The sequence is that of Xaa-Pro dipeptidyl-peptidase from Streptococcus thermophilus.